The sequence spans 447 residues: MNEFEDIIYPGPSHVTTNIEFEDENIENNENYLNLVQILKELVDNNLKEEIEFKPMVGGVTNTLFKSSFITGQGSNKSVIIRLYGKGSEQFIDRKTEANIQYLLSKNGVGPKFYGTFENGCIYGYVEGDQLQLEDLYQNNILSLIAKETGRWHSLKLDINSNSQLLLSSSSDSSIKESTTISTSTSTSTSTSSTSPSTSPSLENSTLSPRNMNTQTSSTSLFKNLNSWINNAMTLTSKESKGSMISKINLNRYKEEAMSLMSFIEEHYSGEEYINFCHNDLIPRNMIYNKEKGQVKFIDFEYSGYNFRGYDIGNFFCEFSGLDLDYTKYPSIEIQKRFIKNYLISINNCKNIQQKQKQKQQQQQIQNSINDENMDIENDELLYEPSKEEIHNLYIESNHLTLGSHLMWGFWGIIQHFSSSIDFDYIDYAIKRFKQYDLVKNKVLSLK.

Residues 178-208 are compositionally biased toward low complexity; the sequence is STTISTSTSTSTSTSSTSPSTSPSLENSTLS. The interval 178–217 is disordered; sequence STTISTSTSTSTSTSSTSPSTSPSLENSTLSPRNMNTQTS.

This sequence belongs to the choline/ethanolamine kinase family.

It is found in the cytoplasm. It carries out the reaction ethanolamine + ATP = phosphoethanolamine + ADP + H(+). Its pathway is phospholipid metabolism; phosphatidylethanolamine biosynthesis; phosphatidylethanolamine from ethanolamine: step 1/3. Functionally, highly specific for ethanolamine phosphorylation. May be a rate-controlling step in phosphatidylethanolamine biosynthesis. The chain is Probable ethanolamine kinase B (etnkB) from Dictyostelium discoideum (Social amoeba).